Consider the following 1202-residue polypeptide: Metabotropic glycine receptor (1202 aa).

Residues 1 to 24 form the signal peptide; it reads MGAMAYSLLLCLLLAHLGLGEVGA. Positions 25-62 are disordered; that stretch reads SLDPSERPDSSRERTSRGKQHGQQLPRASAPDPSIPWS. Residues 25 to 417 are Extracellular-facing; sequence SLDPSERPDS…CFVQEDKYLR (393 aa). Basic and acidic residues predominate over residues 28 to 40; sequence PSERPDSSRERTS. The cache-like region stretch occupies residues 85-281; that stretch reads YLYTGDFHQL…CENGSYKPGW (197 aa). Residues Asn98 and Asn143 are each glycosylated (N-linked (GlcNAc...) asparagine). Residues Cys99 and Cys272 are joined by a disulfide bond. Residues Ser172 and Arg173 each coordinate glycine. Residue Asn215 is glycosylated (N-linked (GlcNAc...) asparagine). Residues 234-253 form a disordered region; sequence LHRRGSNQGPRGLGHSWRRR. Glu271 is a binding site for glycine. Asn274 carries an N-linked (GlcNAc...) asparagine glycan. A glycine-binding site is contributed by Asp307. Residue Asn333 is glycosylated (N-linked (GlcNAc...) asparagine). The helical transmembrane segment at 418-439 threads the bilayer; sequence LAIISFQALCMLLDFVSMLVVY. Topologically, residues 440-451 are cytoplasmic; it reads HFRKAKSIRASG. A helical membrane pass occupies residues 452–474; that stretch reads LILLETILFGSLLLYFPVVILYF. Over 475 to 478 the chain is Extracellular; that stretch reads EPST. The helical transmembrane segment at 479–501 threads the bilayer; sequence FRCILLRWVRLLGFATVYGTVTL. The cysteines at positions 481 and 573 are disulfide-linked. The Cytoplasmic portion of the chain corresponds to 502–525; the sequence is KLHRVLKVFLSRTAQRIPYMTGGR. A helical membrane pass occupies residues 526–547; sequence VMRMLAVIVLVVFWFLVGWTSS. Residues 548–576 are Extracellular-facing; that stretch reads MCQNLERDILLVGQGQTSDNLTFNMCLID. The chain crosses the membrane as a helical span at residues 577 to 597; the sequence is RWDYMTAVAEFLFLLWGIYLC. The Cytoplasmic segment spans residues 598–611; sequence YAVRTVPSAFHEPR. The helical transmembrane segment at 612–633 threads the bilayer; the sequence is YMAVAVHNELIITAIFHTIRFV. Over 634–642 the chain is Extracellular; the sequence is LASRLQPDW. A helical membrane pass occupies residues 643-664; that stretch reads MLMLYFAHTHLTVTVTIGLLLI. The Cytoplasmic portion of the chain corresponds to 665–1202; sequence PKFSHSSNNP…SASKIPGPRK (538 aa). Residues Ser694, Ser705, and Ser708 each carry the phosphoserine modification. Disordered regions lie at residues 757–899 and 914–995; these read RITE…TSML and LGLA…QIKD. 2 stretches are compositionally biased toward basic and acidic residues: residues 769–781 and 819–828; these read CSKE…DHSA and STYDHVRDQT. A Glycyl lysine isopeptide (Lys-Gly) (interchain with G-Cter in ubiquitin) cross-link involves residue Lys774. Over residues 845–856 the composition is skewed to low complexity; it reads ENSTLESLSSKK. Ser865 bears the Phosphoserine mark. Over residues 925–943 the composition is skewed to basic and acidic residues; sequence MEDRAKSQKPQPKDRETNR. Composition is skewed to polar residues over residues 944–958 and 975–994; these read KYSN…PNSN and QRVN…TQIK. Residue Ser946 is modified to Phosphoserine. A VCPWE motif 1 motif is present at residues 1002–1006; it reads VCPWE. Ser1061 is subject to Phosphoserine. The short motif at 1067-1071 is the VCPWE motif 2 element; sequence VCPWE. Residue Ser1076 is modified to Phosphoserine. 2 stretches are compositionally biased toward polar residues: residues 1132–1144 and 1151–1162; these read QMGD…SSSV and CISSNNSPQPLT. A disordered region spans residues 1132-1162; that stretch reads QMGDQEKQTSSSVDIIPGSCISSNNSPQPLT. Positions 1167–1171 match the VCPWE motif 3 motif; that stretch reads VCPWE.

This sequence belongs to the G-protein coupled receptor 3 family. In terms of assembly, homodimer. Associates with the RGS7-GNB5 complex, promoting its localization to the cell membrane and regulating its GTPase activator activity. Interacts (via VCPWE motifs) with GNAO1. Interacts with GPC4. Interacts with EGFLAM.

Its subcellular location is the cell membrane. The protein localises to the postsynaptic cell membrane. It localises to the presynaptic cell membrane. The protein resides in the nucleus. Its function is as follows. Metabotropic receptor for glycine that controls synapse formation and function in the brain. Acts as an atypical G-protein coupled receptor that recruits and regulates the RGS7-GNB5 complex instead of activating G proteins. In absence of glycine ligand, promotes the GTPase activator activity of RGS7, increasing the GTPase activity of G protein alpha subunits, thereby driving them into their inactive GDP-bound form. Glycine-binding changes the conformation of the intracellular surface, inhibiting the GTPase activator activity of the RGS7-GNB5 complex, promoting G protein alpha subunits into their active GTP-bound form and regulating cAMP levels. Also able to bind taurine, a compound closely related to glycine, but with a two-fold lower affinity. Glycine receptor-dependent regulation of cAMP controls key ion channels, kinases and neurotrophic factors involved in neuronal excitability and synaptic transmission. Plays a pivotal role in regulating mood and cognition via its ability to regulate neuronal excitability in L2/L3 pyramidal neurons of the prefrontal cortex. Also involved in spatial learning by regulating hippocampal CA1 neuronal excitability. Acts as a synaptic organizer in the hippocampus, required for proper mossy fiber-CA3 neurocircuitry establishment, structure and function: induces presynaptic differentiation in contacting axons via its interaction with GPC4. In addition to glycine, may also act as a receptor for osteocalcin (BGLAP) hormone: osteocalcin-binding initiates a signaling response that prevents neuronal apoptosis in the hippocampus and regulates the synthesis of neurotransmitters. In Rattus norvegicus (Rat), this protein is Metabotropic glycine receptor.